The primary structure comprises 206 residues: Molybdopterin synthase catalytic subunit (206 aa).

Positions Met-1 to Ala-23 are enriched in polar residues. The tract at residues Met-1–Glu-27 is disordered. Substrate-binding positions include His-131–Arg-132, Lys-147, and Lys-154–Glu-156. Residues Lys-177 to Val-188 show a composition bias toward basic and acidic residues. Residues Lys-177 to Ser-206 are disordered. Over residues Ser-197 to Ser-206 the composition is skewed to gly residues.

Belongs to the MoaE family. MOCS2B subfamily. In terms of assembly, heterotetramer; composed of 2 small (MOCS2A) and 2 large (MOCS2B) subunits.

It is found in the cytoplasm. It catalyses the reaction 2 [molybdopterin-synthase sulfur-carrier protein]-C-terminal-Gly-aminoethanethioate + cyclic pyranopterin phosphate + H2O = molybdopterin + 2 [molybdopterin-synthase sulfur-carrier protein]-C-terminal Gly-Gly + 2 H(+). The protein operates within cofactor biosynthesis; molybdopterin biosynthesis. Catalytic subunit of the molybdopterin synthase complex, a complex that catalyzes the conversion of precursor Z into molybdopterin. Acts by mediating the incorporation of 2 sulfur atoms from thiocarboxylated MOCS2A into precursor Z to generate a dithiolene group. This is Molybdopterin synthase catalytic subunit (nit-8) from Neurospora crassa (strain ATCC 24698 / 74-OR23-1A / CBS 708.71 / DSM 1257 / FGSC 987).